The chain runs to 283 residues: Tetraspanin-33 (283 aa).

Residues 1–24 (MARRPGVPAAYGDEFSFVSPLVKY) lie on the Cytoplasmic side of the membrane. A helical membrane pass occupies residues 25–45 (LLFFFNMLFWVISMVMVAVGV). Over 46 to 64 (YARLMKHAEAALACLAVDP) the chain is Extracellular. The helical transmembrane segment at 65 to 85 (AILLIVVGVLMFLLTFCGCIG) threads the bilayer. At 86–96 (SLRENICLLQT) the chain is on the cytoplasmic side. A helical membrane pass occupies residues 97–117 (FSLCLTIVFLLQLAAGILGFV). Over 118-235 (FSDKARGKVS…DKLVNWIHSN (118 aa)) the chain is Extracellular. 4 disulfides stabilise this stretch: Cys-156–Cys-224, Cys-157–Cys-189, Cys-173–Cys-183, and Cys-190–Cys-203. Residue Asn-172 is glycosylated (N-linked (GlcNAc...) asparagine). The helical transmembrane segment at 236 to 256 (LFLLGGVALGLAIPQLVGILL) threads the bilayer. The Cytoplasmic segment spans residues 257–283 (SQVLVNQIKDQIKLQLYNQQHRADPWY).

It belongs to the tetraspanin (TM4SF) family. In terms of assembly, homodimer; disulfide-linked. Interacts (via extracellular domain) with ADAM10 (via extracellular domain). Interacts (via cytoplasmic domain) with PLEKHA7 (via WW domains); the interaction is dependent on PDZD11 being bound to PLEKHA7 and facilitates the docking of ADAM10 to zonula adherens. As to expression, predominantly expressed in erythroblasts.

It localises to the cell membrane. Its subcellular location is the cell junction. The protein resides in the adherens junction. The protein localises to the cytoplasm. Part of TspanC8 subgroup, composed of 6 members that interact with the transmembrane metalloprotease ADAM10. This interaction is required for ADAM10 exit from the endoplasmic reticulum and for enzymatic maturation and trafficking to the cell surface as well as substrate specificity. Different TspanC8/ADAM10 complexes have distinct substrates. Plays an important role in normal erythropoiesis. It has a role in the differentiation of erythroid progenitors. Negatively regulates ligand-induced Notch activity probably by regulating ADAM10 activity. Mediates docking of ADAM10 to zonula adherens by interacting with ADAM10 and, in a PDZD11-dependent manner, with the zonula adherens protein PLEKHA7. The polypeptide is Tetraspanin-33 (Tspan33) (Mus musculus (Mouse)).